The chain runs to 595 residues: Leiomodin-1 (595 aa).

Disordered regions lie at residues 1–322 and 467–568; these read MSKV…KVKN and DKQR…QEKN. Ser-12 is subject to Phosphoserine. Positions 27 to 40 are enriched in acidic residues; sequence EEMEELEKELDVVD. Composition is skewed to basic and acidic residues over residues 72-105, 117-127, 134-193, 201-224, 232-251, 259-289, 467-476, and 484-493; these read CEKE…EDKG, QDSDVGKEPKK, FSRD…EKTG, SRDK…KLTA, RQED…KPEV, RDSR…REKQ, DKQRQKRLQE, and SGEKKDRLEV. Residue Ser-85 is modified to Phosphoserine. Ser-135 is modified (phosphoserine). Repeat copies occupy residues 165-180, 181-196, 197-212, 213-227, 228-243, 244-257, 258-273, and 274-288. An 8 X approximate tandem repeats region spans residues 165 to 288; it reads AAVDRKEAGK…VREEGKTREK (124 aa). Composition is skewed to pro residues over residues 503–513 and 527–538; these read SPKPSPQPSPK and AAPPPPPPPLAP. The tract at residues 503-522 is 5 X 4 AA approximate tandem repeats; the sequence is SPKPSPQPSPKSAPKNSPKK. Ser-550 is modified (phosphoserine). The WH2 domain occupies 569–588; it reads SRDQLLAAIRSSNLKQLKKV.

As to expression, detected in smooth muscle, in stomach and uterus, blood vessel wall, and in slow fibers in extraocular muscle, urinary bladder and sternothyroid muscle (at protein level).

The protein resides in the cytoplasm. It localises to the myofibril. Its subcellular location is the sarcomere. It is found in the cytoskeleton. Required for proper contractility of visceral smooth muscle cells. Mediates nucleation of actin filaments. The sequence is that of Leiomodin-1 from Rattus norvegicus (Rat).